A 218-amino-acid chain; its full sequence is Thiopurine S-methyltransferase (218 aa).

4 residues coordinate S-adenosyl-L-methionine: Trp-10, Leu-45, Glu-66, and Arg-123.

It belongs to the class I-like SAM-binding methyltransferase superfamily. TPMT family.

It localises to the cytoplasm. It catalyses the reaction S-adenosyl-L-methionine + a thiopurine = S-adenosyl-L-homocysteine + a thiopurine S-methylether.. The protein is Thiopurine S-methyltransferase of Pseudomonas fluorescens (strain SBW25).